Reading from the N-terminus, the 435-residue chain is Large ribosomal subunit protein mL65 (435 aa).

This sequence belongs to the mitochondrion-specific ribosomal protein mL65 family. Component of the mitochondrial ribosome small subunit (28S) which comprises a 12S rRNA and about 30 distinct proteins.

The protein localises to the mitochondrion. This chain is Large ribosomal subunit protein mL65 (MRPS30), found in Bos taurus (Bovine).